A 484-amino-acid chain; its full sequence is Endoglucanase 9 (484 aa).

The N-terminal stretch at 1–21 is a signal peptide; the sequence is MTSLFFFVLLFSSLLISNGDA. D77 (nucleophile) is an active-site residue. Active-site residues include H402, D453, and E462.

Belongs to the glycosyl hydrolase 9 (cellulase E) family. Specifically expressed in root cap cells.

Its subcellular location is the secreted. It is found in the cell wall. The catalysed reaction is Endohydrolysis of (1-&gt;4)-beta-D-glucosidic linkages in cellulose, lichenin and cereal beta-D-glucans.. The chain is Endoglucanase 9 (CEL3) from Arabidopsis thaliana (Mouse-ear cress).